A 292-amino-acid chain; its full sequence is Cyclin-dependent kinase 5 (292 aa).

The region spanning 4–286 is the Protein kinase domain; it reads YEKLEKIGEG…AEEALQHPYF (283 aa). ATP is bound by residues 10–18 and lysine 33; that span reads IGEGTYGTV. Tyrosine 15 is subject to Phosphotyrosine; by ABL1, EPHA4 and FYN. Threonine 17 is modified (phosphothreonine). Lysine 56 is subject to N6-acetyllysine. Serine 72 carries the phosphoserine modification. Aspartate 126 (proton acceptor) is an active-site residue. Position 159 is a phosphoserine (serine 159).

This sequence belongs to the protein kinase superfamily. CMGC Ser/Thr protein kinase family. CDC2/CDKX subfamily. Heterodimer composed of a catalytic subunit CDK5 and a regulatory subunit CDK5R1 (p25) and macromolecular complex composed of at least CDK5, CDK5R1 (p35) and CDK5RAP1 or CDK5RAP2 or CDK5RAP3. Only the heterodimer shows kinase activity. Under neurotoxic stress and neuronal injury conditions, p35 is cleaved by calpain to generate p25 that hyperactivates CDK5, that becomes functionally disabled and often toxic. Found in a trimolecular complex with CABLES1 and ABL1. Interacts with CABLES1 and CABLES2. Interacts with AATK and GSTP1. Binds to HDAC1 when in complex with p25. Interaction with myristoylation p35 promotes CDK5 association with membranes. Both isoforms 1 and 2 interacts with beta-catenin/CTNNB1. Interacts with delta-catenin/CTNND2 and APEX1. Interacts with P53/TP53 in neurons. Interacts with EPHA4; may mediate the activation of NGEF by EPHA4. Interacts with PTK2/FAK1. The complex p35/CDK5 interacts with CLOCK. Post-translationally, phosphorylation on Tyr-15 by ABL1 and FYN, and on Ser-159 by casein kinase 1 promotes kinase activity. By contrast, phosphorylation at Thr-14 inhibits activity. In terms of processing, phosphorylation at Ser-159 is essential for maximal catalytic activity.

It localises to the nucleus. It is found in the cytoplasm. Its subcellular location is the cell membrane. The protein resides in the perikaryon. The protein localises to the cell projection. It localises to the lamellipodium. It is found in the growth cone. Its subcellular location is the postsynaptic density. The protein resides in the synapse. The catalysed reaction is L-seryl-[protein] + ATP = O-phospho-L-seryl-[protein] + ADP + H(+). The enzyme catalyses L-threonyl-[protein] + ATP = O-phospho-L-threonyl-[protein] + ADP + H(+). With respect to regulation, inhibited by 2-(1-ethyl-2-hydroxyethylamino)-6-benzylamino-9-isopropylpurine (roscovitine), 1-isopropyl-4-aminobenzyl-6-ether-linked benzimidazoles, resveratrol, AT-7519 and olomoucine. Activated by CDK5R1 (p35) and CDK5R2 (p39) during the development of the nervous system; degradation of CDK5R1 (p35) and CDK5R2 (p39) by proteasome result in down regulation of kinase activity, during this process, CDK5 phosphorylates p35 and induces its ubiquitination and subsequent degradation. Kinase activity is mainly determined by the amount of p35 available and subcellular location; reversible association to plasma membrane inhibits activity. Long-term inactivation as well as CDK5R1 (p25)-mediated hyperactivation of CDK5 triggers cell death. The pro-death activity of hyperactivated CDK5 is suppressed by membrane association of CDK5, via myristoylation of p35. Brain-derived neurotrophic factor, glial-derived neurotrophic factor, nerve growth factor (NGF), retinoic acid, laminin and neuregulin promote activity. Neurotoxicity enhances nuclear activity, thus leading to MEF2 phosphorylation and inhibition prior to apoptosis of cortical neurons. Repression by GSTP1 via p25/p35 translocation prevents neurodegeneration. Functionally, proline-directed serine/threonine-protein kinase essential for neuronal cell cycle arrest and differentiation and may be involved in apoptotic cell death in neuronal diseases by triggering abortive cell cycle re-entry. Interacts with D1 and D3-type G1 cyclins. Phosphorylates SRC, NOS3, VIM/vimentin, p35/CDK5R1, MEF2A, SIPA1L1, SH3GLB1, PXN, PAK1, MCAM/MUC18, SEPT5, SYN1, DNM1, AMPH, SYNJ1, CDK16, RAC1, RHOA, CDC42, TONEBP/NFAT5, MAPT/TAU, MAP1B, histone H1, p53/TP53, HDAC1, APEX1, PTK2/FAK1, huntingtin/HTT, ATM, MAP2, NEFH and NEFM. Regulates several neuronal development and physiological processes including neuronal survival, migration and differentiation, axonal and neurite growth, synaptogenesis, oligodendrocyte differentiation, synaptic plasticity and neurotransmission, by phosphorylating key proteins. Negatively regulates the CACNA1B/CAV2.2 -mediated Ca(2+) release probability at hippocampal neuronal soma and synaptic terminals. Activated by interaction with CDK5R1 (p35) and CDK5R2 (p39), especially in postmitotic neurons, and promotes CDK5R1 (p35) expression in an autostimulation loop. Phosphorylates many downstream substrates such as Rho and Ras family small GTPases (e.g. PAK1, RAC1, RHOA, CDC42) or microtubule-binding proteins (e.g. MAPT/TAU, MAP2, MAP1B), and modulates actin dynamics to regulate neurite growth and/or spine morphogenesis. Also phosphorylates exocytosis associated proteins such as MCAM/MUC18, SEPT5, SYN1, and CDK16/PCTAIRE1 as well as endocytosis associated proteins such as DNM1, AMPH and SYNJ1 at synaptic terminals. In the mature central nervous system (CNS), regulates neurotransmitter movements by phosphorylating substrates associated with neurotransmitter release and synapse plasticity; synaptic vesicle exocytosis, vesicles fusion with the presynaptic membrane, and endocytosis. Promotes cell survival by activating anti-apoptotic proteins BCL2 and STAT3, and negatively regulating of JNK3/MAPK10 activity. Phosphorylation of p53/TP53 in response to genotoxic and oxidative stresses enhances its stabilization by preventing ubiquitin ligase-mediated proteasomal degradation, and induces transactivation of p53/TP53 target genes, thus regulating apoptosis. Phosphorylation of p35/CDK5R1 enhances its stabilization by preventing calpain-mediated proteolysis producing p25/CDK5R1 and avoiding ubiquitin ligase-mediated proteasomal degradation. During aberrant cell-cycle activity and DNA damage, p25/CDK5 activity elicits cell-cycle activity and double-strand DNA breaks that precedes neuronal death by deregulating HDAC1. DNA damage triggered phosphorylation of huntingtin/HTT in nuclei of neurons protects neurons against polyglutamine expansion as well as DNA damage mediated toxicity. Phosphorylation of PXN reduces its interaction with PTK2/FAK1 in matrix-cell focal adhesions (MCFA) during oligodendrocytes (OLs) differentiation. Negative regulator of Wnt/beta-catenin signaling pathway. Activator of the GAIT (IFN-gamma-activated inhibitor of translation) pathway, which suppresses expression of a post-transcriptional regulon of proinflammatory genes in myeloid cells; phosphorylates the linker domain of glutamyl-prolyl tRNA synthetase (EPRS) in a IFN-gamma-dependent manner, the initial event in assembly of the GAIT complex. Phosphorylation of SH3GLB1 is required for autophagy induction in starved neurons. Phosphorylation of TONEBP/NFAT5 in response to osmotic stress mediates its rapid nuclear localization. MEF2 is inactivated by phosphorylation in nucleus in response to neurotoxin, thus leading to neuronal apoptosis. APEX1 AP-endodeoxyribonuclease is repressed by phosphorylation, resulting in accumulation of DNA damage and contributing to neuronal death. NOS3 phosphorylation down regulates NOS3-derived nitrite (NO) levels. SRC phosphorylation mediates its ubiquitin-dependent degradation and thus leads to cytoskeletal reorganization. May regulate endothelial cell migration and angiogenesis via the modulation of lamellipodia formation. Involved in dendritic spine morphogenesis by mediating the EFNA1-EPHA4 signaling. The complex p35/CDK5 participates in the regulation of the circadian clock by modulating the function of CLOCK protein: phosphorylates CLOCK at 'Thr-451' and 'Thr-461' and regulates the transcriptional activity of the CLOCK-BMAL1 heterodimer in association with altered stability and subcellular distribution. The chain is Cyclin-dependent kinase 5 from Bos taurus (Bovine).